A 273-amino-acid chain; its full sequence is Large ribosomal subunit protein uL2 (273 aa).

Residues 221-273 form a disordered region; the sequence is RGTAMNPVDHPHGGGEGRNFGKHPVSPWGVQTKGKKTRHNKRTDKYIVRRRGK. Residues 253–273 are compositionally biased toward basic residues; that stretch reads KGKKTRHNKRTDKYIVRRRGK.

It belongs to the universal ribosomal protein uL2 family. As to quaternary structure, part of the 50S ribosomal subunit. Forms a bridge to the 30S subunit in the 70S ribosome.

Its function is as follows. One of the primary rRNA binding proteins. Required for association of the 30S and 50S subunits to form the 70S ribosome, for tRNA binding and peptide bond formation. It has been suggested to have peptidyltransferase activity; this is somewhat controversial. Makes several contacts with the 16S rRNA in the 70S ribosome. The chain is Large ribosomal subunit protein uL2 from Mannheimia succiniciproducens (strain KCTC 0769BP / MBEL55E).